We begin with the raw amino-acid sequence, 185 residues long: Threonylcarbamoyl-AMP synthase (185 aa).

A YrdC-like domain is found at 7–185 (AAQRRAARAH…IDFASGRVLR (179 aa)).

Belongs to the SUA5 family. TsaC subfamily.

The protein localises to the cytoplasm. It carries out the reaction L-threonine + hydrogencarbonate + ATP = L-threonylcarbamoyladenylate + diphosphate + H2O. Functionally, required for the formation of a threonylcarbamoyl group on adenosine at position 37 (t(6)A37) in tRNAs that read codons beginning with adenine. Catalyzes the conversion of L-threonine, HCO(3)(-)/CO(2) and ATP to give threonylcarbamoyl-AMP (TC-AMP) as the acyladenylate intermediate, with the release of diphosphate. The chain is Threonylcarbamoyl-AMP synthase from Laribacter hongkongensis (strain HLHK9).